Reading from the N-terminus, the 486-residue chain is Probable glycine dehydrogenase (decarboxylating) subunit 2 (486 aa).

Position 273 is an N6-(pyridoxal phosphate)lysine (Lys273).

The protein belongs to the GcvP family. C-terminal subunit subfamily. The glycine cleavage system is composed of four proteins: P, T, L and H. In this organism, the P 'protein' is a heterodimer of two subunits. The cofactor is pyridoxal 5'-phosphate.

It carries out the reaction N(6)-[(R)-lipoyl]-L-lysyl-[glycine-cleavage complex H protein] + glycine + H(+) = N(6)-[(R)-S(8)-aminomethyldihydrolipoyl]-L-lysyl-[glycine-cleavage complex H protein] + CO2. In terms of biological role, the glycine cleavage system catalyzes the degradation of glycine. The P protein binds the alpha-amino group of glycine through its pyridoxal phosphate cofactor; CO(2) is released and the remaining methylamine moiety is then transferred to the lipoamide cofactor of the H protein. This Alkaliphilus oremlandii (strain OhILAs) (Clostridium oremlandii (strain OhILAs)) protein is Probable glycine dehydrogenase (decarboxylating) subunit 2.